A 430-amino-acid chain; its full sequence is Adenylosuccinate synthetase (430 aa).

Residues 13-19 (GDEGKGK) and 41-43 (GHT) contribute to the GTP site. Residue Asp-14 is the Proton acceptor of the active site. Residues Asp-14 and Gly-41 each coordinate Mg(2+). IMP is bound by residues 14–17 (DEGK), 39–42 (NAGH), Thr-130, Arg-144, Gln-225, Thr-240, and Arg-304. His-42 functions as the Proton donor in the catalytic mechanism. A substrate-binding site is contributed by 300–306 (ASTGRPR). GTP is bound by residues Arg-306, 332–334 (KLD), and 414–416 (STG).

The protein belongs to the adenylosuccinate synthetase family. As to quaternary structure, homodimer. It depends on Mg(2+) as a cofactor.

The protein resides in the cytoplasm. The enzyme catalyses IMP + L-aspartate + GTP = N(6)-(1,2-dicarboxyethyl)-AMP + GDP + phosphate + 2 H(+). The protein operates within purine metabolism; AMP biosynthesis via de novo pathway; AMP from IMP: step 1/2. In terms of biological role, plays an important role in the de novo pathway of purine nucleotide biosynthesis. Catalyzes the first committed step in the biosynthesis of AMP from IMP. The protein is Adenylosuccinate synthetase of Xylella fastidiosa (strain M12).